We begin with the raw amino-acid sequence, 457 residues long: uncharacterized protein (457 aa).

An N-terminal signal peptide occupies residues 1–18 (MKLLISLLWSIFFSIVYS). Over 19-173 (EKTLLNFKHY…GGLPASQFPR (155 aa)) the chain is Lumenal. The chain crosses the membrane as a helical span at residues 174–194 (MPISGGITIAYSVILALWMFF). At 195-207 (RFQYKHSIVTVQK) the chain is on the cytoplasmic side. The chain crosses the membrane as a helical span at residues 208–228 (AIMFLLIFSCAQQAVTSIVLD). Residues 229-243 (TENLRNRGNFTWLGE) lie on the Lumenal side of the membrane. A helical transmembrane segment spans residues 244–264 (TLVSILFACQLVLDLALLLIL). Over 265–284 (SWGYTRYSTNMRDRLFTEAK) the chain is Cytoplasmic. The helical transmembrane segment at 285 to 305 (IPLIICFFALFVVRFFAITIQ) threads the bilayer. Residues 306 to 314 (SIHLGLWFC) are Lumenal-facing. The helical transmembrane segment at 315–335 (FFFLTACISALYILFGAFVAL) threads the bilayer. Topologically, residues 336–358 (PSTLRALVEQRYYTLHSIYKIFR) are cytoplasmic. Residues 359-379 (IMVLCGVVTIFSFSLVALIFC) form a helical membrane-spanning segment. The Lumenal portion of the chain corresponds to 380 to 457 (SNTNNNSTNK…EEDIRADKSK (78 aa)).

It belongs to the LU7TM family.

Its subcellular location is the endoplasmic reticulum membrane. This is an uncharacterized protein from Schizosaccharomyces pombe (strain 972 / ATCC 24843) (Fission yeast).